A 404-amino-acid chain; its full sequence is Tryptophan synthase beta chain (404 aa).

Lys-98 carries the post-translational modification N6-(pyridoxal phosphate)lysine.

The protein belongs to the TrpB family. Tetramer of two alpha and two beta chains. It depends on pyridoxal 5'-phosphate as a cofactor.

The catalysed reaction is (1S,2R)-1-C-(indol-3-yl)glycerol 3-phosphate + L-serine = D-glyceraldehyde 3-phosphate + L-tryptophan + H2O. It participates in amino-acid biosynthesis; L-tryptophan biosynthesis; L-tryptophan from chorismate: step 5/5. The beta subunit is responsible for the synthesis of L-tryptophan from indole and L-serine. The polypeptide is Tryptophan synthase beta chain (Rhodopseudomonas palustris (strain ATCC BAA-98 / CGA009)).